An 873-amino-acid chain; its full sequence is Cilia- and flagella-associated protein 58 (873 aa).

Coiled-coil stretches lie at residues 106 to 609 (VDSA…VISE) and 642 to 832 (ETQY…QKRK). The interval 202-221 (QEIQHRQNEASRESRKKEKL) is disordered. The segment covering 204 to 221 (IQHRQNEASRESRKKEKL) has biased composition (basic and acidic residues).

The protein belongs to the CFAP58 family. In terms of assembly, interacts with ODFP2. In terms of tissue distribution, predominantly expressed in the testis. Also found at lower levels in ciliated cells and tissues such as neural progenitor cells and oviducts.

It localises to the cell projection. The protein resides in the cilium. The protein localises to the flagellum. Its subcellular location is the cytoplasm. It is found in the cytoskeleton. It localises to the microtubule organizing center. The protein resides in the centrosome. Its function is as follows. Has an essential role in the assembly and organization of the sperm flagellar axoneme. Required for the elongation of the primary cilium and sperm flagellar midpiece via modulation of the Notch signaling pathway. The sequence is that of Cilia- and flagella-associated protein 58 from Mus musculus (Mouse).